A 3068-amino-acid polypeptide reads, in one-letter code: Highly reducing polyketide synthase 17 (3068 aa).

The region spanning 100 to 526 (IEPIAIVGAS…GTNAHAIMER (427 aa)) is the Ketosynthase family 3 (KS3) domain. Catalysis depends on for beta-ketoacyl synthase activity residues C274, H410, and H449. Residues 627-938 (YVFTGQGAQW…LAGPIRQCLA (312 aa)) are malonyl-CoA:ACP transacylase (MAT) domain. The active-site For malonyltransferase activity is the S721. The N-terminal hotdog fold stretch occupies residues 1027–1160 (HHLLGVRMTE…GVVEGVMTLD (134 aa)). A dehydratase (DH) domain region spans residues 1027–1311 (HHLLGVRMTE…RASNIDMTIV (285 aa)). The region spanning 1027–1334 (HHLLGVRMTE…SRSLAAHVDG (308 aa)) is the PKS/mFAS DH domain. The active-site Proton acceptor; for dehydratase activity is H1059. The interval 1179–1334 (NRTMVIPEEL…SRSLAAHVDG (156 aa)) is C-terminal hotdog fold. Residue D1247 is the Proton donor; for dehydratase activity of the active site. Residues 1735 to 2037 (LGPVQSSKGD…LVRQGGKVIL (303 aa)) are enoylreductase (ER) domain. Residues 2062-2240 (AAYVVAGGMG…FLSMNIGWIE (179 aa)) are catalytic ketoreductase (KR) domain. Residues 2345-2423 (TIIDFISSAI…DLAEKVASRS (79 aa)) form the Carrier domain. S2383 carries the O-(pantetheine 4'-phosphoryl)serine modification. The segment at 2831–3062 (FDVASLGLRS…SCMITSLLED (232 aa)) is choline/carnitine acyltransferase (cAT) domain.

Its pathway is secondary metabolite biosynthesis. In terms of biological role, highly reducing polyketide synthase; part of the gene cluster that mediates the biosynthesis of (2Z,4E,6E,10E)-9-hydroxydodeca-2,4,6,10-tetraenoic acid (BAA), (2E,4E,6E,10E)-9-hydroxydodeca-2,4,6,10-tetraenoic acid (BAB), and (2Z,4E,6E)-octa-2,4,6-trienedioic acid (PBA). The highly reducing polyketide synthase Ba17a is sufficent to produce PBA and BAA. The still to be characterized protein Ba17b leads to an increased production of BAA as well as to the production of the new compound BAB. BAA does not possess insecticidal activity against G.mellonella larvae, however, both BAA and BAB increase the growth of Candida albicans and BAA can mitigate the fungicidal effects of fluconazole over C.albicans, suggesting that generalist pathogens such as M.anisopliae, can potentially manipulate the yeast microbiota found in arthropods (and anywhere else) by the activity of compounds as BAA and BAB. This is Highly reducing polyketide synthase 17 from Metarhizium anisopliae (Entomophthora anisopliae).